The sequence spans 445 residues: MSRQYFGTDGIRGCTNKDPMTADVAMRVGQAAGAYFKRGLHRHRVLIGKDTRLSGYMVESALMAGFTSVGMDVVLVGPLPTPGVALLTRSMRADLGVMISASHNPFSDNGIKLFGPNGYKLSEEEEKAIEEAIDQPPLLAAPADIGRARRIDDAQGRYIHAVKSSFPESLRLDKLRLVLDCANGAAYQVAPAVLWELGAEVITLGVAPNGLNINDHCGSTDPSALQKKVLETRADLGIALDGDADRVIIVDEKGEIVDGDQIMALIATSAQKRNLLKGNTTVATVMSNLGLERYLSKLGIQLLRTQVGDRHVVEAMRAGGYTVGGEQSGHIILSYHTTTGDGLVAALQVLADLVQSDKKASELLHVFDPFPQLLKNVRYSSGQPLEDESVCEAISEAEESLKGKGRLLIRKSGTEPLIRVMAEAEDPDLVHQIVDHICETVRRAA.

Serine 102 functions as the Phosphoserine intermediate in the catalytic mechanism. The Mg(2+) site is built by serine 102, aspartate 241, aspartate 243, and aspartate 245. Residue serine 102 is modified to Phosphoserine.

This sequence belongs to the phosphohexose mutase family. Requires Mg(2+) as cofactor. Post-translationally, activated by phosphorylation.

The catalysed reaction is alpha-D-glucosamine 1-phosphate = D-glucosamine 6-phosphate. Functionally, catalyzes the conversion of glucosamine-6-phosphate to glucosamine-1-phosphate. This Zymomonas mobilis subsp. mobilis (strain ATCC 31821 / ZM4 / CP4) protein is Phosphoglucosamine mutase.